Consider the following 645-residue polypeptide: ATP-dependent zinc metalloprotease FtsH (645 aa).

Over 1–6 (MDQRPK) the chain is Cytoplasmic. A helical membrane pass occupies residues 7-27 (FGMILFYIVLGVFLMVALRGL). The Periplasmic segment spans residues 28–110 (YTTDTNLSVP…VVYEKGNDSL (83 aa)). Residues 111–131 (FWVNLLGTIIPLAIIVFIWFF) traverse the membrane as a helical segment. Residues 132-645 (AMRSLSGRNS…AKEGNEDEKN (514 aa)) are Cytoplasmic-facing. 204-211 (GPPGTGKT) serves as a coordination point for ATP. His426 serves as a coordination point for Zn(2+). The active site involves Glu427. His430 and Asp503 together coordinate Zn(2+). Residues 623–645 (SKRKVSAVSTNEEAKEGNEDEKN) are disordered. A compositionally biased stretch (basic and acidic residues) spans 634-645 (EEAKEGNEDEKN).

It in the central section; belongs to the AAA ATPase family. In the C-terminal section; belongs to the peptidase M41 family. In terms of assembly, homohexamer. Zn(2+) is required as a cofactor.

Its subcellular location is the cell inner membrane. Acts as a processive, ATP-dependent zinc metallopeptidase for both cytoplasmic and membrane proteins. Plays a role in the quality control of integral membrane proteins. The chain is ATP-dependent zinc metalloprotease FtsH from Kosmotoga olearia (strain ATCC BAA-1733 / DSM 21960 / TBF 19.5.1).